Consider the following 120-residue polypeptide: U13-lycotoxin-Ls1a (120 aa).

A signal peptide spans 1–16 (MKTLFVLISILYAVYC). Residues 17–54 (FSSEEDVDSAYLANELEPVEDINSEQYAALEPKEEQER) constitute a propeptide that is removed on maturation. Cystine bridges form between C56–C70, C63–C76, C69–C87, and C78–C85. In terms of domain architecture, Agouti spans 56 to 95 (CADMGQDCKDDCDCCLNIATCNCWFGRYFCSCTFGDYQTC).

This sequence belongs to the neurotoxin 05 (agouti) family. In terms of processing, contains 6 disulfide bonds. In terms of tissue distribution, expressed by the venom gland.

Its subcellular location is the secreted. This chain is U13-lycotoxin-Ls1a, found in Lycosa singoriensis (Wolf spider).